Reading from the N-terminus, the 98-residue chain is Aspartyl/glutamyl-tRNA(Asn/Gln) amidotransferase subunit C (98 aa).

A disordered region spans residues 75-98 (EQALSGAPDSDDNRFKVPAILDEA).

Belongs to the GatC family. In terms of assembly, heterotrimer of A, B and C subunits.

It catalyses the reaction L-glutamyl-tRNA(Gln) + L-glutamine + ATP + H2O = L-glutaminyl-tRNA(Gln) + L-glutamate + ADP + phosphate + H(+). It carries out the reaction L-aspartyl-tRNA(Asn) + L-glutamine + ATP + H2O = L-asparaginyl-tRNA(Asn) + L-glutamate + ADP + phosphate + 2 H(+). In terms of biological role, allows the formation of correctly charged Asn-tRNA(Asn) or Gln-tRNA(Gln) through the transamidation of misacylated Asp-tRNA(Asn) or Glu-tRNA(Gln) in organisms which lack either or both of asparaginyl-tRNA or glutaminyl-tRNA synthetases. The reaction takes place in the presence of glutamine and ATP through an activated phospho-Asp-tRNA(Asn) or phospho-Glu-tRNA(Gln). This chain is Aspartyl/glutamyl-tRNA(Asn/Gln) amidotransferase subunit C, found in Pseudarthrobacter chlorophenolicus (strain ATCC 700700 / DSM 12829 / CIP 107037 / JCM 12360 / KCTC 9906 / NCIMB 13794 / A6) (Arthrobacter chlorophenolicus).